The sequence spans 747 residues: ATPase family gene 2 protein homolog B (747 aa).

M1 is modified (N-acetylmethionine). Residues 234–241 (GPPGVGKT) and 500–507 (GPPGCAKT) each bind ATP.

It belongs to the AAA ATPase family. AFG2 subfamily. In terms of assembly, part of the 55LCC heterohexameric ATPase complex composed at least of AIRIM, AFG2A, AFG2B and CINP. Associates with pre-60S ribosomal particles. In terms of tissue distribution, expressed in neurons; also expressed at lower level in astrocytes, oligodendrocytes and microglia.

Its subcellular location is the cytoplasm. It localises to the cytoskeleton. The protein localises to the spindle. It is found in the nucleus. The enzyme catalyses ATP + H2O = ADP + phosphate + H(+). With respect to regulation, in the context of 55LCC heterohexameric ATPase complex, the ATPase activity is stimulated by DNA binding and inhibited in presence of RNA. Functionally, ATP-dependent chaperone part of the 55LCC heterohexameric ATPase complex which is chromatin-associated and promotes replisome proteostasis to maintain replication fork progression and genome stability. Required for replication fork progression, sister chromatid cohesion, and chromosome stability. The ATPase activity is specifically enhanced by replication fork DNA and is coupled to cysteine protease-dependent cleavage of replisome substrates in response to replication fork damage. Uses ATPase activity to process replisome substrates in S-phase, facilitating their proteolytic turnover from chromatin to ensure DNA replication and mitotic fidelity. Plays an essential role in the cytoplasmic maturation steps of pre-60S ribosomal particles by promoting the release of shuttling protein RSL24D1/RLP24 from the pre-ribosomal particles. This Rattus norvegicus (Rat) protein is ATPase family gene 2 protein homolog B (Afg2b).